Reading from the N-terminus, the 92-residue chain is Small ribosomal subunit protein uS19 (92 aa).

Belongs to the universal ribosomal protein uS19 family.

Its function is as follows. Protein S19 forms a complex with S13 that binds strongly to the 16S ribosomal RNA. This Paracidovorax citrulli (strain AAC00-1) (Acidovorax citrulli) protein is Small ribosomal subunit protein uS19.